A 278-amino-acid polypeptide reads, in one-letter code: PILR alpha-associated neural protein (278 aa).

A signal peptide spans 1–27 (MWSAQLLSQLLPLWPLLLLSVLPPAQG). The disordered stretch occupies residues 25–93 (AQGSSHRSPP…PSGFEEGPPS (69 aa)). The Extracellular segment spans residues 28-174 (SSHRSPPAPA…FGGRGEGVDP (147 aa)). A glycan (O-linked (GalNAc...) threonine) is linked at Thr-136. The chain crosses the membrane as a helical span at residues 175-195 (QLYVTITISIIIVLVATGIIF). The Cytoplasmic segment spans residues 196 to 278 (KFCWDRSQKR…QLNRIPLVNL (83 aa)). Residues 206–278 (RRPSGQQGAL…QLNRIPLVNL (73 aa)) are disordered. Over residues 209 to 225 (SGQQGALRQEESQQPLT) the composition is skewed to polar residues.

In terms of processing, O-glycosylation at Thr-136 is essential for recognition by PILRA. In terms of tissue distribution, mainly expressed in brain and spinal cord. Weak expression also detected in heart, kidney, spleen and lymph node. Virtually no expression detected in liver and embryo relative to brain.

The protein resides in the membrane. Acts as a ligand for PILRA in neuronal tissues, where it may be involved in immune regulation. The protein is PILR alpha-associated neural protein (Pianp) of Mus musculus (Mouse).